The chain runs to 161 residues: Nucleoside diphosphate kinase (161 aa).

Residues Lys12, Phe60, Arg88, Thr94, and Arg105 each coordinate ATP. His121 (pros-phosphohistidine intermediate) is an active-site residue.

Belongs to the NDK family. Mg(2+) serves as cofactor.

It is found in the cytoplasm. It carries out the reaction a 2'-deoxyribonucleoside 5'-diphosphate + ATP = a 2'-deoxyribonucleoside 5'-triphosphate + ADP. The enzyme catalyses a ribonucleoside 5'-diphosphate + ATP = a ribonucleoside 5'-triphosphate + ADP. Functionally, major role in the synthesis of nucleoside triphosphates other than ATP. The ATP gamma phosphate is transferred to the NDP beta phosphate via a ping-pong mechanism, using a phosphorylated active-site intermediate. The sequence is that of Nucleoside diphosphate kinase from Pyrococcus furiosus (strain ATCC 43587 / DSM 3638 / JCM 8422 / Vc1).